Consider the following 198-residue polypeptide: Large ribosomal subunit protein bL21 (198 aa).

The protein belongs to the bacterial ribosomal protein bL21 family. In terms of assembly, part of the 50S ribosomal subunit. Contacts protein L20.

Its function is as follows. This protein binds to 23S rRNA in the presence of protein L20. This is Large ribosomal subunit protein bL21 from Ruegeria sp. (strain TM1040) (Silicibacter sp.).